The chain runs to 59 residues: Metallothionein-1B (59 aa).

Residues methionine 1–serine 29 are beta. The a divalent metal cation site is built by cysteine 5, cysteine 6, cysteine 10, cysteine 17, cysteine 21, cysteine 23, cysteine 26, cysteine 28, cysteine 31, cysteine 34, cysteine 38, cysteine 40, cysteine 46, cysteine 50, cysteine 54, cysteine 56, and cysteine 57. The segment at proline 30–lysine 59 is alpha.

The protein belongs to the metallothionein superfamily. Type 3 family.

Binds six divalent metal ions. Known to bind copper and cadmium. This chain is Metallothionein-1B, found in Callinectes sapidus (Blue crab).